We begin with the raw amino-acid sequence, 219 residues long: Segregation and condensation protein B (219 aa).

The interval 193 to 219 is disordered; that stretch reads SLFAGGEEPSAEAADGGAGESTHGEEE. Residues 196–207 show a composition bias toward low complexity; that stretch reads AGGEEPSAEAAD.

It belongs to the ScpB family. In terms of assembly, homodimer. Homodimerization may be required to stabilize the binding of ScpA to the Smc head domains. Component of a cohesin-like complex composed of ScpA, ScpB and the Smc homodimer, in which ScpA and ScpB bind to the head domain of Smc. The presence of the three proteins is required for the association of the complex with DNA.

It is found in the cytoplasm. In terms of biological role, participates in chromosomal partition during cell division. May act via the formation of a condensin-like complex containing Smc and ScpA that pull DNA away from mid-cell into both cell halves. In Symbiobacterium thermophilum (strain DSM 24528 / JCM 14929 / IAM 14863 / T), this protein is Segregation and condensation protein B.